The sequence spans 136 residues: Large ribosomal subunit protein uL16c (136 aa).

Belongs to the universal ribosomal protein uL16 family. In terms of assembly, part of the 50S ribosomal subunit.

It localises to the plastid. The protein localises to the chloroplast. In Saccharum hybrid (Sugarcane), this protein is Large ribosomal subunit protein uL16c.